Reading from the N-terminus, the 171-residue chain is Ribosome maturation factor RimM (171 aa).

The 73-residue stretch at Glu-96–Leu-168 folds into the PRC barrel domain.

The protein belongs to the RimM family. As to quaternary structure, binds ribosomal protein uS19.

The protein resides in the cytoplasm. In terms of biological role, an accessory protein needed during the final step in the assembly of 30S ribosomal subunit, possibly for assembly of the head region. Essential for efficient processing of 16S rRNA. May be needed both before and after RbfA during the maturation of 16S rRNA. It has affinity for free ribosomal 30S subunits but not for 70S ribosomes. This chain is Ribosome maturation factor RimM, found in Corynebacterium glutamicum (strain R).